The chain runs to 365 residues: UDP-N-acetylglucosamine--N-acetylmuramyl-(pentapeptide) pyrophosphoryl-undecaprenol N-acetylglucosamine transferase (365 aa).

Residues 17–19, Asn-129, Arg-167, Ser-194, Ile-250, 269–274, and Gln-295 contribute to the UDP-N-acetyl-alpha-D-glucosamine site; these read TGG and ALTVSE.

The protein belongs to the glycosyltransferase 28 family. MurG subfamily.

It is found in the cell inner membrane. The enzyme catalyses di-trans,octa-cis-undecaprenyl diphospho-N-acetyl-alpha-D-muramoyl-L-alanyl-D-glutamyl-meso-2,6-diaminopimeloyl-D-alanyl-D-alanine + UDP-N-acetyl-alpha-D-glucosamine = di-trans,octa-cis-undecaprenyl diphospho-[N-acetyl-alpha-D-glucosaminyl-(1-&gt;4)]-N-acetyl-alpha-D-muramoyl-L-alanyl-D-glutamyl-meso-2,6-diaminopimeloyl-D-alanyl-D-alanine + UDP + H(+). The protein operates within cell wall biogenesis; peptidoglycan biosynthesis. Its function is as follows. Cell wall formation. Catalyzes the transfer of a GlcNAc subunit on undecaprenyl-pyrophosphoryl-MurNAc-pentapeptide (lipid intermediate I) to form undecaprenyl-pyrophosphoryl-MurNAc-(pentapeptide)GlcNAc (lipid intermediate II). The sequence is that of UDP-N-acetylglucosamine--N-acetylmuramyl-(pentapeptide) pyrophosphoryl-undecaprenol N-acetylglucosamine transferase from Shewanella woodyi (strain ATCC 51908 / MS32).